Here is a 476-residue protein sequence, read N- to C-terminus: Chromosomal replication initiator protein DnaA (476 aa).

The interval 1-73 is domain I, interacts with DnaA modulators; the sequence is MTNSEQERWS…LSAWQAEMPE (73 aa). The domain II stretch occupies residues 73–132; the sequence is EVHRIDLSVRTAMRCATPAKEAPAAVEARRPERSDAKPVSDARAPVMTPVAASHDALGGS. Residues 92 to 115 are disordered; sequence KEAPAAVEARRPERSDAKPVSDAR. A compositionally biased stretch (basic and acidic residues) spans 99 to 112; the sequence is EARRPERSDAKPVS. Residues 133–355 are domain III, AAA+ region; it reads PLDPRLTFAS…GAINRLLAHS (223 aa). ATP is bound by residues glycine 180, glycine 182, lysine 183, and threonine 184. Positions 356–476 are domain IV, binds dsDNA; the sequence is KLNNQPVTLD…VESLKRQLQD (121 aa).

It belongs to the DnaA family. As to quaternary structure, oligomerizes as a right-handed, spiral filament on DNA at oriC.

The protein localises to the cytoplasm. Plays an essential role in the initiation and regulation of chromosomal replication. ATP-DnaA binds to the origin of replication (oriC) to initiate formation of the DNA replication initiation complex once per cell cycle. Binds the DnaA box (a 9 base pair repeat at the origin) and separates the double-stranded (ds)DNA. Forms a right-handed helical filament on oriC DNA; dsDNA binds to the exterior of the filament while single-stranded (ss)DNA is stabiized in the filament's interior. The ATP-DnaA-oriC complex binds and stabilizes one strand of the AT-rich DNA unwinding element (DUE), permitting loading of DNA polymerase. After initiation quickly degrades to an ADP-DnaA complex that is not apt for DNA replication. Binds acidic phospholipids. This chain is Chromosomal replication initiator protein DnaA, found in Bradyrhizobium sp. (strain ORS 278).